The following is a 417-amino-acid chain: Methyltransferase/ribosomally synthesized cyclic peptide dendrothelin A precursor dbihMA (417 aa).

Residues 1-251 (MESSTQTKPG…GVSTFYIPPK (251 aa)) are methyltransferase domain. Catalysis depends on residues Arg72, Tyr76, and Tyr98. Positions 98, 100, 103, 130, 172, 213, 244, and 245 each coordinate S-adenosyl-L-methionine. Residues 252-378 (ARKDINTDII…WAIRCAMKNM (127 aa)) are clasp domain. Residues 379 to 399 (PSSLLEAASQSVEEASMNGFP) are precursor leader. Residues Val401 and Val403 each carry the N-methylvaline modification. An N-methylthreonine modification is found at Thr404. Gly405 is subject to N-methylglycine. Ile406 bears the N-methylisoleucine mark. An N-methylvaline modification is found at Val407. Gly408 is subject to N-methylglycine. Ile410 is modified (N-methylisoleucine). Gly411 carries the post-translational modification N-methylglycine. N-methylvaline is present on Val413.

It in the N-terminal section; belongs to the precorrin methyltransferase family. In terms of assembly, homodimer. DbiMA automethylates at Val-401, Val-403, Thr-404, Gly-405, Ile-406, Val-407, Gly-408, Ile-410, Gly-411 and Val-413 before being processed by the prolyloligopeptidase dbiP which likely forms a peptidyl ester upon removal of the follower propeptide, which then undergoes macrocyclization with the N-terminus of the modified core peptide. Peptide backbone alpha-N-methylations change the physicochemical properties of amide bonds to provide structural constraints and other favorable characteristics including biological membrane permeability to peptides.

The protein operates within mycotoxin biosynthesis. Functionally, fusion protein of the methyltransferase dbiM and the dendrothelin core peptide; part of the gene cluster that mediates the biosynthesis of dendrothelin A, a highly methylated cyclic dodecapeptide showing slight nematodicidal activity. Dendrothelin A derives from the C-terminus of the dbiMA protein, and it is the dbiMA protein that methylates its own C-terminus using S-adenosyl methionine (SAM). The C-terminus is subsequently cleaved off and macrocyclized by the prolyloligopeptidase dbiP to give the final product. The protein is Methyltransferase/ribosomally synthesized cyclic peptide dendrothelin A precursor dbihMA of Dendrothele bispora (strain CBS 962.96).